The following is a 593-amino-acid chain: A-type ATP synthase subunit A (593 aa).

236 to 243 (GPFGSGKT) lines the ATP pocket.

This sequence belongs to the ATPase alpha/beta chains family. As to quaternary structure, has multiple subunits with at least A(3), B(3), C, D, E, F, H, I and proteolipid K(x).

It is found in the cell membrane. The enzyme catalyses ATP + H2O + 4 H(+)(in) = ADP + phosphate + 5 H(+)(out). In terms of biological role, component of the A-type ATP synthase that produces ATP from ADP in the presence of a proton gradient across the membrane. The A chain is the catalytic subunit. In Pyrobaculum islandicum (strain DSM 4184 / JCM 9189 / GEO3), this protein is A-type ATP synthase subunit A.